The sequence spans 332 residues: tRNA dimethylallyltransferase 2 (332 aa).

An ATP-binding site is contributed by 15–22 (GPTASGKT). A substrate-binding site is contributed by 17 to 22 (TASGKT). Interaction with substrate tRNA stretches follow at residues 40–43 (DSVM) and 164–168 (QRIQR).

It belongs to the IPP transferase family. Monomer. The cofactor is Mg(2+).

The catalysed reaction is adenosine(37) in tRNA + dimethylallyl diphosphate = N(6)-dimethylallyladenosine(37) in tRNA + diphosphate. Functionally, catalyzes the transfer of a dimethylallyl group onto the adenine at position 37 in tRNAs that read codons beginning with uridine, leading to the formation of N6-(dimethylallyl)adenosine (i(6)A). This is tRNA dimethylallyltransferase 2 from Hahella chejuensis (strain KCTC 2396).